The following is a 363-amino-acid chain: Peptide chain release factor 2 (363 aa).

An N5-methylglutamine modification is found at Q251.

The protein belongs to the prokaryotic/mitochondrial release factor family. Post-translationally, methylated by PrmC. Methylation increases the termination efficiency of RF2.

Its subcellular location is the cytoplasm. Peptide chain release factor 2 directs the termination of translation in response to the peptide chain termination codons UGA and UAA. The chain is Peptide chain release factor 2 (prfB) from Helicobacter pylori (strain J99 / ATCC 700824) (Campylobacter pylori J99).